The sequence spans 389 residues: Arginine biosynthesis bifunctional protein ArgJ (389 aa).

Substrate contacts are provided by Thr150, Lys173, Thr184, Glu263, Asn384, and Thr389. The active-site Nucleophile is the Thr184.

It belongs to the ArgJ family. In terms of assembly, heterotetramer of two alpha and two beta chains.

The protein resides in the cytoplasm. The catalysed reaction is N(2)-acetyl-L-ornithine + L-glutamate = N-acetyl-L-glutamate + L-ornithine. It carries out the reaction L-glutamate + acetyl-CoA = N-acetyl-L-glutamate + CoA + H(+). It participates in amino-acid biosynthesis; L-arginine biosynthesis; L-ornithine and N-acetyl-L-glutamate from L-glutamate and N(2)-acetyl-L-ornithine (cyclic): step 1/1. The protein operates within amino-acid biosynthesis; L-arginine biosynthesis; N(2)-acetyl-L-ornithine from L-glutamate: step 1/4. Catalyzes two activities which are involved in the cyclic version of arginine biosynthesis: the synthesis of N-acetylglutamate from glutamate and acetyl-CoA as the acetyl donor, and of ornithine by transacetylation between N(2)-acetylornithine and glutamate. The sequence is that of Arginine biosynthesis bifunctional protein ArgJ from Deinococcus radiodurans (strain ATCC 13939 / DSM 20539 / JCM 16871 / CCUG 27074 / LMG 4051 / NBRC 15346 / NCIMB 9279 / VKM B-1422 / R1).